A 284-amino-acid chain; its full sequence is Probable endonuclease 4 (284 aa).

9 residues coordinate Zn(2+): His-69, His-109, Glu-145, Asp-179, His-182, His-216, Asp-229, His-231, and Glu-261.

It belongs to the AP endonuclease 2 family. Zn(2+) is required as a cofactor.

The enzyme catalyses Endonucleolytic cleavage to 5'-phosphooligonucleotide end-products.. Endonuclease IV plays a role in DNA repair. It cleaves phosphodiester bonds at apurinic or apyrimidinic (AP) sites, generating a 3'-hydroxyl group and a 5'-terminal sugar phosphate. In Klebsiella pneumoniae (strain 342), this protein is Probable endonuclease 4.